Reading from the N-terminus, the 105-residue chain is Thioredoxin (105 aa).

Residues 2 to 105 (VKQIESKYAF…KLEATINELI (104 aa)) enclose the Thioredoxin domain. At K3 the chain carries N6-acetyllysine. Residue K8 is modified to N6-succinyllysine. Residues C32 and C35 each act as nucleophile in the active site. C32 and C35 are disulfide-bonded. K39 bears the N6-acetyllysine mark. S-nitrosocysteine occurs at positions 62 and 69. C73 carries the post-translational modification S-nitrosocysteine; alternate. At K94 the chain carries N6-acetyllysine; alternate. K94 is subject to N6-succinyllysine; alternate.

It belongs to the thioredoxin family. As to quaternary structure, homodimer; disulfide-linked. Interacts with TXNIP through the redox-active site. Interacts with MAP3K5 and CASP3. Interacts with APEX1; the interaction stimulates the FOS/JUN AP-1 DNA-binding activity in a redox-dependent manner. Post-translationally, in the fully reduced protein, both Cys-69 and Cys-73 are nitrosylated in response to nitric oxide (NO). When two disulfide bonds are present in the protein, only Cys-73 is nitrosylated. Cys-73 can serve as donor for nitrosylation of target proteins.

It is found in the nucleus. The protein resides in the cytoplasm. The protein localises to the secreted. Participates in various redox reactions through the reversible oxidation of its active center dithiol to a disulfide and catalyzes dithiol-disulfide exchange reactions. Plays a role in the reversible S-nitrosylation of cysteine residues in target proteins, and thereby contributes to the response to intracellular nitric oxide. Nitrosylates the active site Cys of CASP3 in response to nitric oxide (NO), and thereby inhibits caspase-3 activity. Induces the FOS/JUN AP-1 DNA binding activity in ionizing radiation (IR) cells through its oxidation/reduction status and stimulates AP-1 transcriptional activity. In Ovis aries (Sheep), this protein is Thioredoxin (TXN).